A 620-amino-acid polypeptide reads, in one-letter code: Glutathione-regulated potassium-efflux system protein KefC (620 aa).

12 helical membrane passes run 4 to 24 (HTLIQALIYLGSAALIVPIAV), 26 to 46 (LGLGSVLGYLIAGCIIGPWGL), 54 to 74 (SILHFAEIGVVLMLFIIGLEL), 90 to 110 (GALQMVICGGLLGLFCMLLGL), 114 to 134 (VAELIGMTLALSSTAIAMQAM), 149 to 169 (FAVLLFQDIAAIPLVAMIPLL), 178 to 198 (MGAFALSALKVAGALVLVVLL), 218 to 238 (VFSAVALFLVFGFGLLLEEVG), 270 to 290 (GLLLGLFFIGVGMSIDFGTLL), 294 to 314 (LRIVILLLGFLIIKIAMLWLI), 327 to 347 (WFAVLLGQGSEFAFVVFGAAQ), and 359 to 379 (SLTLAVALSMAATPILLVILN). The RCK N-terminal domain maps to 399–518 (QPRVIIAGFG…AGVEKPERET (120 aa)). Residues 597–620 (GWQGTEEGKHTGNMADEPETKPSS) are disordered.

This sequence belongs to the monovalent cation:proton antiporter 2 (CPA2) transporter (TC 2.A.37) family. KefC subfamily. In terms of assembly, homodimer. Interacts with the regulatory subunit KefF.

The protein localises to the cell inner membrane. In terms of biological role, pore-forming subunit of a potassium efflux system that confers protection against electrophiles. Catalyzes K(+)/H(+) antiport. The sequence is that of Glutathione-regulated potassium-efflux system protein KefC from Escherichia coli O8 (strain IAI1).